Here is a 222-residue protein sequence, read N- to C-terminus: Probable transaldolase 2 (222 aa).

Lys-90 serves as the catalytic Schiff-base intermediate with substrate.

Belongs to the transaldolase family. Type 3B subfamily.

It is found in the cytoplasm. The enzyme catalyses D-sedoheptulose 7-phosphate + D-glyceraldehyde 3-phosphate = D-erythrose 4-phosphate + beta-D-fructose 6-phosphate. Its pathway is carbohydrate degradation; pentose phosphate pathway; D-glyceraldehyde 3-phosphate and beta-D-fructose 6-phosphate from D-ribose 5-phosphate and D-xylulose 5-phosphate (non-oxidative stage): step 2/3. Functionally, transaldolase is important for the balance of metabolites in the pentose-phosphate pathway. The polypeptide is Probable transaldolase 2 (Bacillus anthracis).